The primary structure comprises 264 residues: S-adenosylmethionine decarboxylase proenzyme (264 aa).

Serine 112 (schiff-base intermediate with substrate; via pyruvic acid) is an active-site residue. Serine 112 is modified (pyruvic acid (Ser); by autocatalysis). The active-site Proton acceptor; for processing activity is the histidine 117. Cysteine 140 acts as the Proton donor; for catalytic activity in catalysis.

This sequence belongs to the prokaryotic AdoMetDC family. Type 2 subfamily. Heterooctamer of four alpha and four beta chains arranged as a tetramer of alpha/beta heterodimers. Pyruvate serves as cofactor. Is synthesized initially as an inactive proenzyme. Formation of the active enzyme involves a self-maturation process in which the active site pyruvoyl group is generated from an internal serine residue via an autocatalytic post-translational modification. Two non-identical subunits are generated from the proenzyme in this reaction, and the pyruvate is formed at the N-terminus of the alpha chain, which is derived from the carboxyl end of the proenzyme. The post-translation cleavage follows an unusual pathway, termed non-hydrolytic serinolysis, in which the side chain hydroxyl group of the serine supplies its oxygen atom to form the C-terminus of the beta chain, while the remainder of the serine residue undergoes an oxidative deamination to produce ammonia and the pyruvoyl group blocking the N-terminus of the alpha chain.

It carries out the reaction S-adenosyl-L-methionine + H(+) = S-adenosyl 3-(methylsulfanyl)propylamine + CO2. The protein operates within amine and polyamine biosynthesis; S-adenosylmethioninamine biosynthesis; S-adenosylmethioninamine from S-adenosyl-L-methionine: step 1/1. In terms of biological role, catalyzes the decarboxylation of S-adenosylmethionine to S-adenosylmethioninamine (dcAdoMet), the propylamine donor required for the synthesis of the polyamines spermine and spermidine from the diamine putrescine. The protein is S-adenosylmethionine decarboxylase proenzyme of Klebsiella pneumoniae subsp. pneumoniae (strain ATCC 700721 / MGH 78578).